Consider the following 479-residue polypeptide: Cardiolipin synthase A (479 aa).

A run of 2 helical transmembrane segments spans residues 8 to 28 (FFGY…LHAV) and 38 to 58 (IAWA…YLIF). 2 consecutive PLD phosphodiesterase domains span residues 218–245 (VNFR…GDEY) and 392–419 (QPGF…DNRS). Residues histidine 223, lysine 225, aspartate 230, histidine 397, lysine 399, and aspartate 404 contribute to the active site.

It belongs to the phospholipase D family. Cardiolipin synthase subfamily. ClsA sub-subfamily.

The protein resides in the cell inner membrane. The enzyme catalyses 2 a 1,2-diacyl-sn-glycero-3-phospho-(1'-sn-glycerol) = a cardiolipin + glycerol. Its function is as follows. Catalyzes the reversible phosphatidyl group transfer from one phosphatidylglycerol molecule to another to form cardiolipin (CL) (diphosphatidylglycerol) and glycerol. The chain is Cardiolipin synthase A from Pseudomonas entomophila (strain L48).